We begin with the raw amino-acid sequence, 61 residues long: MAEVRVGENESLDSALRRFRRQCSKAGVLSELRKREHYESPSVKRKKKAEAARKRKYKYGR.

A disordered region spans residues 36-61 (EHYESPSVKRKKKAEAARKRKYKYGR). Basic residues predominate over residues 43 to 61 (VKRKKKAEAARKRKYKYGR).

Belongs to the bacterial ribosomal protein bS21 family.

This chain is Small ribosomal subunit protein bS21 (rpsU), found in Caldanaerobacter subterraneus subsp. tengcongensis (strain DSM 15242 / JCM 11007 / NBRC 100824 / MB4) (Thermoanaerobacter tengcongensis).